The following is a 618-amino-acid chain: DnaJ homolog subfamily C member 2 (618 aa).

The J domain occupies 85–158 (DHYAVLGLAH…VKRRAFDSVD (74 aa)). Disordered regions lie at residues 281-315 (KEEE…QQEE), 330-349 (QAAQ…IKKE), and 419-448 (LQKE…QNNR). Residues 428–448 (QAQQAARGSEHSSAAGGQNNR) show a composition bias toward polar residues. 2 consecutive SANT domains span residues 445–507 (QNNR…KLDP) and 548–603 (SNAA…EMIK).

Component of ribosome-associated complex (RAC).

Its subcellular location is the nucleus. It localises to the cytoplasm. It is found in the cytosol. Functionally, acts both as a chaperone in the cytosol and as a chromatin regulator in the nucleus. When cytosolic, acts as a molecular chaperone: component of the ribosome-associated complex (RAC), a complex involved in folding or maintaining nascent polypeptides in a folding-competent state. When nuclear, mediates the switching from polycomb-repressed genes to an active state: specifically recruited at histone H2A ubiquitinated at 'Lys-119' (H2AK119ub), and promotes the displacement of the polycomb PRC1 complex from chromatin, thereby facilitating transcription activation. The sequence is that of DnaJ homolog subfamily C member 2 (dnajc2) from Danio rerio (Zebrafish).